Consider the following 304-residue polypeptide: Ribosomal RNA small subunit methyltransferase H (304 aa).

Residues 37-39 (GGH), D57, F79, D100, and H107 contribute to the S-adenosyl-L-methionine site.

The protein belongs to the methyltransferase superfamily. RsmH family.

It is found in the cytoplasm. The catalysed reaction is cytidine(1402) in 16S rRNA + S-adenosyl-L-methionine = N(4)-methylcytidine(1402) in 16S rRNA + S-adenosyl-L-homocysteine + H(+). Specifically methylates the N4 position of cytidine in position 1402 (C1402) of 16S rRNA. This Bacteroides fragilis (strain YCH46) protein is Ribosomal RNA small subunit methyltransferase H.